The primary structure comprises 950 residues: General transcription factor II-I repeat domain-containing protein 2 (950 aa).

2 GTF2I-like repeats span residues 100–194 (QVDS…QPGG) and 324–418 (LSSL…SNVG).

This sequence belongs to the TFII-I family.

The protein resides in the nucleus. This is General transcription factor II-I repeat domain-containing protein 2 (GTF2IRD2) from Bos taurus (Bovine).